We begin with the raw amino-acid sequence, 333 residues long: tRNA uridine(34) hydroxylase (333 aa).

The region spanning 123–217 (SDPEVVLVDT…YLEEVNKAES (95 aa)) is the Rhodanese domain. The active-site Cysteine persulfide intermediate is cysteine 177. Over residues 313–327 (QKKEALRKQSAEKNK) the composition is skewed to basic and acidic residues. The interval 313–333 (QKKEALRKQSAEKNKAKQANA) is disordered.

Belongs to the TrhO family.

It catalyses the reaction uridine(34) in tRNA + AH2 + O2 = 5-hydroxyuridine(34) in tRNA + A + H2O. Functionally, catalyzes oxygen-dependent 5-hydroxyuridine (ho5U) modification at position 34 in tRNAs. The sequence is that of tRNA uridine(34) hydroxylase from Shewanella oneidensis (strain ATCC 700550 / JCM 31522 / CIP 106686 / LMG 19005 / NCIMB 14063 / MR-1).